The chain runs to 589 residues: NADP-dependent malic enzyme (589 aa).

The Proton donor role is filled by Tyr137. Residue Arg190 coordinates NAD(+). Lys208 acts as the Proton acceptor in catalysis. Residues Glu280, Asp281, and Asp304 each contribute to the a divalent metal cation site. Residue Asp304 participates in NAD(+) binding. 333–349 is an NADP(+) binding site; that stretch reads LFLGAGEAGTGIAELIA. Asn445 is an NAD(+) binding site.

Belongs to the malic enzymes family. Homotetramer. Requires Mg(2+) as cofactor. Mn(2+) is required as a cofactor.

Its subcellular location is the cytoplasm. It carries out the reaction (S)-malate + NADP(+) = pyruvate + CO2 + NADPH. The enzyme catalyses oxaloacetate + H(+) = pyruvate + CO2. The protein is NADP-dependent malic enzyme (ME1) of Phaseolus vulgaris (Kidney bean).